Consider the following 165-residue polypeptide: Crossover junction endodeoxyribonuclease RuvC (165 aa).

Active-site residues include D6, E67, and D142. The Mg(2+) site is built by D6, E67, and D142.

Belongs to the RuvC family. In terms of assembly, homodimer which binds Holliday junction (HJ) DNA. The HJ becomes 2-fold symmetrical on binding to RuvC with unstacked arms; it has a different conformation from HJ DNA in complex with RuvA. In the full resolvosome a probable DNA-RuvA(4)-RuvB(12)-RuvC(2) complex forms which resolves the HJ. It depends on Mg(2+) as a cofactor.

It localises to the cytoplasm. The enzyme catalyses Endonucleolytic cleavage at a junction such as a reciprocal single-stranded crossover between two homologous DNA duplexes (Holliday junction).. In terms of biological role, the RuvA-RuvB-RuvC complex processes Holliday junction (HJ) DNA during genetic recombination and DNA repair. Endonuclease that resolves HJ intermediates. Cleaves cruciform DNA by making single-stranded nicks across the HJ at symmetrical positions within the homologous arms, yielding a 5'-phosphate and a 3'-hydroxyl group; requires a central core of homology in the junction. The consensus cleavage sequence is 5'-(A/T)TT(C/G)-3'. Cleavage occurs on the 3'-side of the TT dinucleotide at the point of strand exchange. HJ branch migration catalyzed by RuvA-RuvB allows RuvC to scan DNA until it finds its consensus sequence, where it cleaves and resolves the cruciform DNA. The protein is Crossover junction endodeoxyribonuclease RuvC of Chlamydia abortus (strain DSM 27085 / S26/3) (Chlamydophila abortus).